The chain runs to 575 residues: Carboxylesterase 5A (575 aa).

Residues 1-27 form the signal peptide; it reads MSGEWGHLGQTLIWAVWVLAAATEGPA. N82 carries N-linked (GlcNAc...) asparagine glycosylation. A disulfide bond links C94 and C121. Residue S226 is the Acyl-ester intermediate of the active site. C280 and C291 are oxidised to a cystine. The N-linked (GlcNAc...) asparagine glycan is linked to N281. The active-site Charge relay system is the E345. N363 carries an N-linked (GlcNAc...) asparagine glycan. The active-site Charge relay system is the H454. An N-linked (GlcNAc...) asparagine glycan is attached at N524.

It belongs to the type-B carboxylesterase/lipase family. In terms of processing, N-glycosylated.

The protein resides in the secreted. It catalyses the reaction a carboxylic ester + H2O = an alcohol + a carboxylate + H(+). In terms of biological role, involved in the detoxification of xenobiotics and in the activation of ester and amide prodrugs. This chain is Carboxylesterase 5A (CES5A), found in Canis lupus familiaris (Dog).